Here is a 131-residue protein sequence, read N- to C-terminus: Profilin-4 (131 aa).

Cys13 and Cys115 form a disulfide bridge. The Involved in PIP2 interaction signature appears at 81–97 (AVIRGKKGAGGITIKKT). A Phosphothreonine modification is found at Thr111.

This sequence belongs to the profilin family. As to quaternary structure, occurs in many kinds of cells as a complex with monomeric actin in a 1:1 ratio. In terms of processing, phosphorylated by MAP kinases.

The protein localises to the cytoplasm. It is found in the cytoskeleton. Its function is as follows. Binds to actin and affects the structure of the cytoskeleton. At high concentrations, profilin prevents the polymerization of actin, whereas it enhances it at low concentrations. The protein is Profilin-4 of Phleum pratense (Common timothy).